Here is a 1959-residue protein sequence, read N- to C-terminus: Sodium channel protein type 10 subunit alpha (1959 aa).

The Cytoplasmic segment spans residues 1-125; that stretch reads MEFPIGSVGT…FNLIRRTAIK (125 aa). A disordered region spans residues 30–53; that stretch reads AHGAAKKARAKHGERKGQDEKPRP. A compositionally biased stretch (basic residues) spans 33–43; the sequence is AAKKARAKHGE. Residues 44-53 are compositionally biased toward basic and acidic residues; sequence RKGQDEKPRP. The I repeat unit spans residues 116–404; sequence FNLIRRTAIK…VTMAYEEQNQ (289 aa). A helical membrane pass occupies residues 126–149; sequence VSVHAWFSIFITITILFNCVCMTQ. Over 150-154 the chain is Extracellular; the sequence is NDLPE. A helical transmembrane segment spans residues 155 to 174; it reads KIEYAFTVIYTFEALIKILA. Over 175 to 187 the chain is Cytoplasmic; it reads RGFCLNEFTYLRD. Residues 188 to 206 traverse the membrane as a helical segment; it reads PWNWLDFSVITLAYVGAAI. Over 207–212 the chain is Extracellular; sequence DLRGIS. The helical; Voltage-sensor transmembrane segment at 213-232 threads the bilayer; the sequence is GLRTFRVLRALKTVSVIPGL. Over 233–248 the chain is Cytoplasmic; that stretch reads KVIVGALIHSVRKLAD. A helical membrane pass occupies residues 249 to 272; that stretch reads VTILTVFCLSVFALVGLQLFKGNL. At 273–340 the chain is on the extracellular side; the sequence is KNKCIKRSTD…PDFNYTSFDS (68 aa). Residues Cys-276 and Cys-318 are joined by a disulfide bond. Asn-288, Asn-311, and Asn-334 each carry an N-linked (GlcNAc...) asparagine glycan. The segment at residues 341 to 365 is an intramembrane region (pore-forming); it reads FAWAFLSLFRLMTQDSWERLYQQTL. Topologically, residues 366 to 372 are extracellular; that stretch reads RASGKMY. A helical transmembrane segment spans residues 373 to 398; that stretch reads MVFFVLVIFLGSFYLVNLILAVVTMA. Residues 399-659 are Cytoplasmic-facing; it reads YEEQNQATIA…KWMKFKMVLF (261 aa). Phosphoserine occurs at positions 440, 443, 466, and 478. Disordered regions lie at residues 442 to 484 and 510 to 578; these read HSHN…YNQR and SQDV…ELTT. Residues 475-484 show a composition bias toward polar residues; the sequence is SPQSDPYNQR. A compositionally biased stretch (basic and acidic residues) spans 523–533; sequence GVFHGDHESHR. Phosphoserine occurs at positions 612 and 615. The stretch at 647–911 is one II repeat; sequence CCPKWMKFKM…EDDGEVNNLQ (265 aa). The helical transmembrane segment at 660–684 threads the bilayer; it reads ELVTDPFAELTITLCIVVNTIFMAM. Residues 685-695 are Extracellular-facing; the sequence is EHYPMTDAFDA. A helical membrane pass occupies residues 696–719; it reads MLQAGNIVFTVFFTMEMAFKIIAF. Topologically, residues 720–727 are cytoplasmic; sequence DPYYYFQK. The helical transmembrane segment at 728–747 threads the bilayer; it reads KWNVFDCVIVTVSLLELSIA. Residues 748–753 lie on the Extracellular side of the membrane; sequence KKGSLS. The helical; Voltage-sensor transmembrane segment at 754-773 threads the bilayer; sequence VLRTFRLLRVFKLAKSWPTL. Over 774–789 the chain is Cytoplasmic; it reads NTLIKIIGNSVGALGN. A helical transmembrane segment spans residues 790–810; that stretch reads LTFILAIIVFIFALVGKQLLG. Over 811–834 the chain is Extracellular; it reads EDYGCRKDGTALWNEGQLRWHMCD. Positions 835–855 form an intramembrane region, pore-forming; the sequence is FFHSFLVIFRILCGEWIENMW. The Extracellular segment spans residues 856–864; it reads VCMQVSEKS. Residues Cys-857 and Cys-866 are joined by a disulfide bond. Residues 865–890 traverse the membrane as a helical segment; it reads ICLILFLTVMVLGNLVVLNLFIALLL. The Cytoplasmic segment spans residues 891 to 1149; sequence NSFSADNLTA…GWQVRKTCYR (259 aa). The span at 1004 to 1016 shows a compositional bias: acidic residues; that stretch reads GESDLDELEEDIE. 2 disordered regions span residues 1004–1034 and 1071–1097; these read GESD…QQDQ and ATPQ…PDPE. Residues 1142–1451 form an III repeat; sequence QVRKTCYRIV…KKYYNAMKKL (310 aa). A helical membrane pass occupies residues 1150–1173; it reads IVEHSWFESFIIFMILLSSGALAF. Over 1174–1186 the chain is Extracellular; the sequence is EDNYLEQKPRVKS. Residues 1187 to 1212 traverse the membrane as a helical segment; it reads MLEYTDRVFTFIFVFEMLLKWVAYGF. At 1213-1218 the chain is on the cytoplasmic side; that stretch reads KKYFTN. Residues 1219 to 1240 form a helical membrane-spanning segment; sequence AWCWLDFLIVNISLTSLIAKIL. Residues 1241 to 1244 are Extracellular-facing; it reads DYSD. A helical; Voltage-sensor membrane pass occupies residues 1245-1266; that stretch reads VASLKALRTLRALRPLRALSRF. Residues 1267–1285 are Cytoplasmic-facing; it reads EGMRVVVDALVGAIPSIMN. The chain crosses the membrane as a helical span at residues 1286–1313; it reads VLLVCLIFWLIFSIMGVNLFAGKFSRCI. At 1314–1355 the chain is on the extracellular side; that stretch reads DTSNNPFSVVNSTIVNNKSECRNQNHTGHFFWVNVKVNFDNV. An intramembrane region (pore-forming) is located at residues 1356 to 1377; the sequence is AMGYLALLQVATFKGWMDIMYA. Residues 1378-1393 are Extracellular-facing; sequence AVDSREINSQPQWEDN. A helical membrane pass occupies residues 1394–1420; it reads LYMYLYFVVFIIFGGFFTLNLFVGVII. The Cytoplasmic segment spans residues 1421-1473; that stretch reads DNFNQQKKKLGGQDIFMTEEQKKYYNAMKKLGSKKPQKPIPRPLNKYQGFVFD. At Ser-1453 the chain carries Phosphoserine; by PKC. The stretch at 1460–1759 is one IV repeat; the sequence is IPRPLNKYQG…WEKFDPEATQ (300 aa). A helical membrane pass occupies residues 1474-1497; that stretch reads IVTRQAFDIIIMVLICLNMITMMV. The Extracellular segment spans residues 1498-1508; sequence ETDGQSEEKTK. The helical transmembrane segment at 1509 to 1532 threads the bilayer; that stretch reads ILGRINQFFVAVFTGECVMKMFAL. Residues 1533-1538 are Cytoplasmic-facing; it reads RQYYFT. A helical membrane pass occupies residues 1539-1562; that stretch reads NGWNVFDFIVVILSIGSLVFSAIL. The Extracellular segment spans residues 1563–1574; sequence KSLESYFSPTLF. Residues 1575–1596 form a helical; Voltage-sensor membrane-spanning segment; it reads RVIRLARIGRILRLIRAAKGIR. Topologically, residues 1597 to 1611 are cytoplasmic; sequence TLLFALMMSLPALFN. The helical transmembrane segment at 1612–1634 threads the bilayer; sequence IGLLLFLVMFIYSIFGMASFANV. The Extracellular segment spans residues 1635–1648; it reads VEEAGIDDMFNFQT. An intramembrane region (pore-forming) is located at residues 1649–1671; sequence FGNSMLCLFQITTSAGWDGLLSP. Residues 1672–1699 lie on the Extracellular side of the membrane; sequence ILNTGPPYCDPNLSNNNTSKGNCGSPTV. A helical transmembrane segment spans residues 1700 to 1724; that stretch reads GIVFFTTYIIISFLIVVNMYIAVIL. Over 1725–1959 the chain is Cytoplasmic; that stretch reads ENFNVATEES…SKEGDSPGPQ (235 aa). The IQ domain occupies 1853 to 1882; that stretch reads EDISATVIQKAYRSYVLQRSLTLSNPLRVP. The segment at 1901–1959 is disordered; the sequence is ANDSGRLPDKSETTSATSFPPSYDSVTRGLSDRVNISTSNSMHNEDEVTSKEGDSPGPQ. Over residues 1943–1959 the composition is skewed to basic and acidic residues; sequence HNEDEVTSKEGDSPGPQ.

This sequence belongs to the sodium channel (TC 1.A.1.10) family. Nav1.8/SCN10A subfamily. In terms of assembly, the channel consists of an ion conducting pore forming alpha-subunit regulated by one or more associated auxiliary subunits SCN1B, SCN2B and SCN3B; electrophysiological properties may vary depending on the type of the associated beta subunits. Found in a number of complexes with PRX, DYNLT1 and PDZD2. Interacts with proteins such as FSTL1, PRX, DYNLT1, PDZD2, S100A10 and many others. Interacts with NEDD4 and NEDD4L. Ubiquitinated by NEDD4L; which promotes its endocytosis. Post-translationally, phosphorylation at Ser-1453 by PKC in a highly conserved cytoplasmic loop slows inactivation of the sodium channel and reduces peak sodium currents. In terms of processing, lacks the cysteine which covalently binds the conotoxin GVIIJ. This cysteine (position 816) is speculated in other sodium channel subunits alpha to be implied in covalent binding with the sodium channel subunit beta-2 or beta-4.

It localises to the cell membrane. The enzyme catalyses Na(+)(in) = Na(+)(out). Tetrodotoxin-resistant channel that mediates the voltage-dependent sodium ion permeability of excitable membranes. Assuming opened or closed conformations in response to the voltage difference across the membrane, the protein forms a sodium-selective channel through which sodium ions may pass in accordance with their electrochemical gradient. Plays a role in neuropathic pain mechanisms. In Onychomys torridus (Southern grasshopper mouse), this protein is Sodium channel protein type 10 subunit alpha (Scn10a).